The primary structure comprises 206 residues: Small ribosomal subunit protein uS4 (206 aa).

The region spanning 96–156 (TRLDNVVYRM…EKSKTQARII (61 aa)) is the S4 RNA-binding domain.

This sequence belongs to the universal ribosomal protein uS4 family. As to quaternary structure, part of the 30S ribosomal subunit. Contacts protein S5. The interaction surface between S4 and S5 is involved in control of translational fidelity.

Its function is as follows. One of the primary rRNA binding proteins, it binds directly to 16S rRNA where it nucleates assembly of the body of the 30S subunit. With S5 and S12 plays an important role in translational accuracy. In Colwellia psychrerythraea (strain 34H / ATCC BAA-681) (Vibrio psychroerythus), this protein is Small ribosomal subunit protein uS4.